The following is a 389-amino-acid chain: Lipid-A-disaccharide synthase (389 aa).

It belongs to the LpxB family.

It catalyses the reaction a lipid X + a UDP-2-N,3-O-bis[(3R)-3-hydroxyacyl]-alpha-D-glucosamine = a lipid A disaccharide + UDP + H(+). The protein operates within bacterial outer membrane biogenesis; LPS lipid A biosynthesis. Condensation of UDP-2,3-diacylglucosamine and 2,3-diacylglucosamine-1-phosphate to form lipid A disaccharide, a precursor of lipid A, a phosphorylated glycolipid that anchors the lipopolysaccharide to the outer membrane of the cell. This chain is Lipid-A-disaccharide synthase, found in Burkholderia ambifaria (strain ATCC BAA-244 / DSM 16087 / CCUG 44356 / LMG 19182 / AMMD) (Burkholderia cepacia (strain AMMD)).